The primary structure comprises 314 residues: tRNA pseudouridine synthase B (314 aa).

His43 contributes to the substrate binding site. Asp48 serves as the catalytic Nucleophile. The substrate site is built by Tyr76, Tyr179, and Leu200.

The protein belongs to the pseudouridine synthase TruB family. Type 1 subfamily.

The catalysed reaction is uridine(55) in tRNA = pseudouridine(55) in tRNA. Functionally, responsible for synthesis of pseudouridine from uracil-55 in the psi GC loop of transfer RNAs. This chain is tRNA pseudouridine synthase B, found in Salmonella choleraesuis (strain SC-B67).